A 118-amino-acid polypeptide reads, in one-letter code: Small ribosomal subunit protein uS13 (118 aa).

Residues 91-118 (HRRGLPVRGQRTKTNARTRKGPRKPIKK) are disordered.

The protein belongs to the universal ribosomal protein uS13 family. As to quaternary structure, part of the 30S ribosomal subunit. Forms a loose heterodimer with protein S19. Forms two bridges to the 50S subunit in the 70S ribosome.

Its function is as follows. Located at the top of the head of the 30S subunit, it contacts several helices of the 16S rRNA. In the 70S ribosome it contacts the 23S rRNA (bridge B1a) and protein L5 of the 50S subunit (bridge B1b), connecting the 2 subunits; these bridges are implicated in subunit movement. Contacts the tRNAs in the A and P-sites. The sequence is that of Small ribosomal subunit protein uS13 from Sodalis glossinidius (strain morsitans).